A 558-amino-acid chain; its full sequence is REST corepressor spr-1 (558 aa).

Residues 1–106 (MDLYDDDGES…KVKGPLSNTN (106 aa)) are disordered. A compositionally biased stretch (acidic residues) spans 36 to 56 (TIEENVPEVEENTLLEEDSLV). Positions 69-80 (KPSKSKRKRKRS) are enriched in basic residues. The ELM2 domain maps to 107-192 (KEINVGTEFQ…SAIAEVARRN (86 aa)). Positions 193–244 (ELKDVWTDQEITLFENCYQIFGKNFSQIRSALCHRSLQSIVQFYYESKKRVK) constitute an SANT 1 domain. A GATA-type zinc finger spans residues 271 to 325 (AIFESMCDNCGEKAENMQINNAMNRPECRACLIYFNQTGVPRPTSLRLVLAERIR). Positions 378 to 402 (CTENGNVGETSSPSAQKTEIQSESD) are enriched in polar residues. The interval 378–406 (CTENGNVGETSSPSAQKTEIQSESDGSGP) is disordered. The SANT 2 domain occupies 481 to 532 (HYSQDWTQLERSQVIRCFNMYGAHFEHIADVIGTKTPDQVYQFYLENQKAID).

This sequence belongs to the CoREST family. Probably part of a large repressor complex. Interacts with histone demethylase spr-5/lsd-1.

The protein localises to the nucleus. Functionally, probable corepressor protein, which probably participates in the transcriptional repression of the presenilin protein hop-1. Probably acts via the formation of a multiprotein complex that deacetylates and demethylates specific sites on histones. Acts redundantly with the transcriptional repressor lin-35 to play a role in vulval morphogenesis and promote germline proliferation. The sequence is that of REST corepressor spr-1 from Caenorhabditis elegans.